The primary structure comprises 378 residues: Erythronate-4-phosphate dehydrogenase (378 aa).

Residues serine 45 and threonine 66 each coordinate substrate. The NAD(+) site is built by aspartate 146 and threonine 175. The active site involves arginine 208. Residue aspartate 232 coordinates NAD(+). The active site involves glutamate 237. The active-site Proton donor is histidine 254. Glycine 257 contacts NAD(+). Tyrosine 258 provides a ligand contact to substrate.

The protein belongs to the D-isomer specific 2-hydroxyacid dehydrogenase family. PdxB subfamily. Homodimer.

The protein resides in the cytoplasm. It carries out the reaction 4-phospho-D-erythronate + NAD(+) = (R)-3-hydroxy-2-oxo-4-phosphooxybutanoate + NADH + H(+). The protein operates within cofactor biosynthesis; pyridoxine 5'-phosphate biosynthesis; pyridoxine 5'-phosphate from D-erythrose 4-phosphate: step 2/5. Functionally, catalyzes the oxidation of erythronate-4-phosphate to 3-hydroxy-2-oxo-4-phosphonooxybutanoate. This chain is Erythronate-4-phosphate dehydrogenase, found in Escherichia coli O45:K1 (strain S88 / ExPEC).